Consider the following 354-residue polypeptide: ATP-dependent (S)-NAD(P)H-hydrate dehydratase (354 aa).

The YjeF C-terminal domain occupies 42–350 (AENILRAITP…ECLGRSLEDI (309 aa)). Residues Gly155 and 208-214 (NVNEYKR) contribute to the (6S)-NADPHX site. ATP contacts are provided by residues 248-252 (KGKSD) and 267-276 (GSPRRCGGQG). Residue Asp277 coordinates (6S)-NADPHX.

Belongs to the NnrD/CARKD family. Mg(2+) serves as cofactor.

The enzyme catalyses (6S)-NADHX + ATP = ADP + phosphate + NADH + H(+). The catalysed reaction is (6S)-NADPHX + ATP = ADP + phosphate + NADPH + H(+). Functionally, catalyzes the dehydration of the S-form of NAD(P)HX at the expense of ATP, which is converted to ADP. Together with NAD(P)HX epimerase, which catalyzes the epimerization of the S- and R-forms, the enzyme allows the repair of both epimers of NAD(P)HX, a damaged form of NAD(P)H that is a result of enzymatic or heat-dependent hydration. The polypeptide is ATP-dependent (S)-NAD(P)H-hydrate dehydratase (Vitis vinifera (Grape)).